The following is a 217-amino-acid chain: MRLVLVGPPGAGKGTQAEFVAAHLAVPKISTGDIFRSNVSQGTPLGVQAKRYMDAGELVPDEVTINMVRDRLAEPDAGEGFLLDGFPRTTPQAAALDKLLVDLGTALDLVLELVVDDDEVIRRLSGRRTCRGCGKVWHVEFDAPSQEGRCDRCGAELFQRDDDKPETIATRLREYADKTAPLVDYYGAQSKLVGIDATGPVEDVTVRAIDALRSYSG.

10-15 (GAGKGT) contributes to the ATP binding site. Positions 30-59 (STGDIFRSNVSQGTPLGVQAKRYMDAGELV) are NMP. Residues Thr31, Arg36, 57–59 (ELV), 85–88 (GFPR), and Gln92 contribute to the AMP site. The segment at 126–163 (GRRTCRGCGKVWHVEFDAPSQEGRCDRCGAELFQRDDD) is LID. Residue Arg127 coordinates ATP. Residues Cys130, Cys133, Cys150, and Cys153 each contribute to the Zn(2+) site. Residues Arg160 and Arg171 each contribute to the AMP site. An ATP-binding site is contributed by Gly199.

The protein belongs to the adenylate kinase family. Monomer.

Its subcellular location is the cytoplasm. The enzyme catalyses AMP + ATP = 2 ADP. It participates in purine metabolism; AMP biosynthesis via salvage pathway; AMP from ADP: step 1/1. Catalyzes the reversible transfer of the terminal phosphate group between ATP and AMP. Plays an important role in cellular energy homeostasis and in adenine nucleotide metabolism. The chain is Adenylate kinase from Salinispora tropica (strain ATCC BAA-916 / DSM 44818 / JCM 13857 / NBRC 105044 / CNB-440).